Consider the following 697-residue polypeptide: Elongation factor G (697 aa).

The 281-residue stretch at 10–290 folds into the tr-type G domain; it reads THFRNIGIAA…AVVDYLPSPL (281 aa). GTP is bound by residues 19-26, 89-93, and 143-146; these read AHIDAGKT, DTPGH, and NKMD.

It belongs to the TRAFAC class translation factor GTPase superfamily. Classic translation factor GTPase family. EF-G/EF-2 subfamily.

The protein localises to the cytoplasm. Its function is as follows. Catalyzes the GTP-dependent ribosomal translocation step during translation elongation. During this step, the ribosome changes from the pre-translocational (PRE) to the post-translocational (POST) state as the newly formed A-site-bound peptidyl-tRNA and P-site-bound deacylated tRNA move to the P and E sites, respectively. Catalyzes the coordinated movement of the two tRNA molecules, the mRNA and conformational changes in the ribosome. The sequence is that of Elongation factor G from Deinococcus deserti (strain DSM 17065 / CIP 109153 / LMG 22923 / VCD115).